The following is a 305-amino-acid chain: Glycine--tRNA ligase alpha subunit (305 aa).

The protein belongs to the class-II aminoacyl-tRNA synthetase family. As to quaternary structure, tetramer of two alpha and two beta subunits.

It localises to the cytoplasm. It catalyses the reaction tRNA(Gly) + glycine + ATP = glycyl-tRNA(Gly) + AMP + diphosphate. The sequence is that of Glycine--tRNA ligase alpha subunit from Streptococcus pyogenes serotype M4 (strain MGAS10750).